The primary structure comprises 248 residues: Acetylglutamate kinase (248 aa).

Residues 36–37 (GG), R58, and N147 each bind substrate.

This sequence belongs to the acetylglutamate kinase family. ArgB subfamily.

The protein localises to the cytoplasm. It carries out the reaction N-acetyl-L-glutamate + ATP = N-acetyl-L-glutamyl 5-phosphate + ADP. Its pathway is amino-acid biosynthesis; L-arginine biosynthesis; N(2)-acetyl-L-ornithine from L-glutamate: step 2/4. In terms of biological role, catalyzes the ATP-dependent phosphorylation of N-acetyl-L-glutamate. The sequence is that of Acetylglutamate kinase from Thermus thermophilus (strain ATCC BAA-163 / DSM 7039 / HB27).